Consider the following 755-residue polypeptide: Subtilisin-like protease 4 (755 aa).

Positions 1 to 20 are cleaved as a signal peptide; the sequence is MDYFLFIALTFLLTFHVHNA. The region spanning 41 to 119 is the Inhibitor I9 domain; the sequence is YIIHVTGPEG…ISAHPQRVLH (79 aa). A Peptidase S8 domain is found at 128–611; the sequence is FLGLQQDTGV…SGHVNPSRAN (484 aa). Catalysis depends on Asp153, which acts as the Charge relay system. N-linked (GlcNAc...) asparagine glycosylation occurs at Asn182. Catalysis depends on His217, which acts as the Charge relay system. Residues Asn297, Asn325, Asn393, Asn468, and Asn529 are each glycosylated (N-linked (GlcNAc...) asparagine). Residues 376-461 enclose the PA domain; that stretch reads PLAYAGKNGK…ATHVSYAAGI (86 aa). Catalysis depends on Ser544, which acts as the Charge relay system. 2 N-linked (GlcNAc...) asparagine glycosylation sites follow: Asn706 and Asn727.

Belongs to the peptidase S8 family.

The protein localises to the secreted. It localises to the extracellular space. The protein resides in the apoplast. In terms of biological role, required for arbuscular mycorrhiza (AM) development during AM symbiosis with AM fungi (e.g. Glomeromycota intraradices). This chain is Subtilisin-like protease 4, found in Lotus japonicus (Lotus corniculatus var. japonicus).